The sequence spans 920 residues: DNA ligase (920 aa).

Residues 90–94 (DAAYD), 139–140 (SL), and Glu173 contribute to the NAD(+) site. Lys175 serves as the catalytic N6-AMP-lysine intermediate. Residues Arg196, Glu235, Lys360, and Lys384 each coordinate NAD(+). Residues Cys481, Cys484, Cys500, and Cys506 each contribute to the Zn(2+) site. The interval 662–691 (GEAAIESAETQGDTASETTGAPTGAEAPLG) is disordered. Residues 669 to 682 (AETQGDTASETTGA) show a composition bias toward polar residues. A BRCT domain is found at 839-920 (SLPQTLAGKT…FAQLLATGTI (82 aa)).

Belongs to the NAD-dependent DNA ligase family. LigA subfamily. It depends on Mg(2+) as a cofactor. Mn(2+) is required as a cofactor.

It carries out the reaction NAD(+) + (deoxyribonucleotide)n-3'-hydroxyl + 5'-phospho-(deoxyribonucleotide)m = (deoxyribonucleotide)n+m + AMP + beta-nicotinamide D-nucleotide.. Functionally, DNA ligase that catalyzes the formation of phosphodiester linkages between 5'-phosphoryl and 3'-hydroxyl groups in double-stranded DNA using NAD as a coenzyme and as the energy source for the reaction. It is essential for DNA replication and repair of damaged DNA. The chain is DNA ligase from Bifidobacterium longum (strain DJO10A).